A 124-amino-acid polypeptide reads, in one-letter code: UPF0102 protein Rcas_2007 (124 aa).

The protein belongs to the UPF0102 family.

The chain is UPF0102 protein Rcas_2007 from Roseiflexus castenholzii (strain DSM 13941 / HLO8).